A 496-amino-acid polypeptide reads, in one-letter code: Cytochrome P450 71B14 (496 aa).

The helical transmembrane segment at 1–21 threads the bilayer; it reads MIWWFIVGASFFFAFILIAKD. Heme is bound at residue Cys-436.

Belongs to the cytochrome P450 family. The cofactor is heme.

Its subcellular location is the membrane. This is Cytochrome P450 71B14 (CYP71B14) from Arabidopsis thaliana (Mouse-ear cress).